The sequence spans 185 residues: Elongation factor P (185 aa).

It belongs to the elongation factor P family.

It is found in the cytoplasm. It functions in the pathway protein biosynthesis; polypeptide chain elongation. Involved in peptide bond synthesis. Stimulates efficient translation and peptide-bond synthesis on native or reconstituted 70S ribosomes in vitro. Probably functions indirectly by altering the affinity of the ribosome for aminoacyl-tRNA, thus increasing their reactivity as acceptors for peptidyl transferase. This is Elongation factor P from Paraburkholderia phytofirmans (strain DSM 17436 / LMG 22146 / PsJN) (Burkholderia phytofirmans).